A 240-amino-acid chain; its full sequence is MLIIAGLGNPGSKYAGNRHNIGFLAVDAIHRRHSFSPWSKKFKAAIAEGELGGEKVLLIKPQTYMNLSGEAVGEAMRFYKLQPADLVAIYDELDLPAGKARLKTGGGHGGHNGIKSLDAHCGKEYRRLRLGIGHPGVKEMVQNHVLGDFAKADNAWLEPLLDTLADNADMLVRNEDSQLMNKIALALGGKADEEKPRKDSEKKPAGQSHIRQARNNNQPKLPATGPMADMLKKMFGNKGE.

Residue Y14 participates in tRNA binding. H19 serves as the catalytic Proton acceptor. TRNA contacts are provided by Y64, N66, and N112. The span at 190-204 (KADEEKPRKDSEKKP) shows a compositional bias: basic and acidic residues. The tract at residues 190–240 (KADEEKPRKDSEKKPAGQSHIRQARNNNQPKLPATGPMADMLKKMFGNKGE) is disordered. The span at 209–219 (HIRQARNNNQP) shows a compositional bias: polar residues.

It belongs to the PTH family. In terms of assembly, monomer.

It is found in the cytoplasm. The catalysed reaction is an N-acyl-L-alpha-aminoacyl-tRNA + H2O = an N-acyl-L-amino acid + a tRNA + H(+). In terms of biological role, hydrolyzes ribosome-free peptidyl-tRNAs (with 1 or more amino acids incorporated), which drop off the ribosome during protein synthesis, or as a result of ribosome stalling. Catalyzes the release of premature peptidyl moieties from peptidyl-tRNA molecules trapped in stalled 50S ribosomal subunits, and thus maintains levels of free tRNAs and 50S ribosomes. This is Peptidyl-tRNA hydrolase from Rhizobium etli (strain ATCC 51251 / DSM 11541 / JCM 21823 / NBRC 15573 / CFN 42).